The sequence spans 37 residues: Large ribosomal subunit protein bL36 (37 aa).

Belongs to the bacterial ribosomal protein bL36 family.

In Chromohalobacter salexigens (strain ATCC BAA-138 / DSM 3043 / CIP 106854 / NCIMB 13768 / 1H11), this protein is Large ribosomal subunit protein bL36.